Here is a 398-residue protein sequence, read N- to C-terminus: MANYLTAKLPGIGGSIKTCPDDFLVEELPLYPTCGEGEHLYLEVEKRGMTTFELLKRLSRALQVNERAMGYAGLKDAQATTRQFISVTDCSAEQALALQLQDIRILSARRHRNKLRLGHLAGNRFTITIRDIDSDALEKARDILHVLQMTGVPNFFGEQRYGALGNSHLIGQAIVQKNFSQAAAHIIGDPDKIIHPEWRQGAILYAENRLEEAEQALPRRMRNERNLVRSLRQGRSAEKAVRRLPGKLLRLYLSAYQSHLFDRLVSMRLESLETLWTGDIAYKHDNGACFLVTDAALEQPRADRFEISPTAPLFGHKVMMAEAQAGILEQALLAKEGITPDDFRLGAGLSMPGERRPLRIPISETASNQQGNELELSFSLPKGSFATTVLHEVMKTDV.

Asp-76 (nucleophile) is an active-site residue. Residues 151 to 360 enclose the TRUD domain; sequence GVPNFFGEQR…MPGERRPLRI (210 aa).

Belongs to the pseudouridine synthase TruD family.

It carries out the reaction uridine(13) in tRNA = pseudouridine(13) in tRNA. Its function is as follows. Responsible for synthesis of pseudouridine from uracil-13 in transfer RNAs. This is tRNA pseudouridine synthase D from Syntrophotalea carbinolica (strain DSM 2380 / NBRC 103641 / GraBd1) (Pelobacter carbinolicus).